A 704-amino-acid chain; its full sequence is Ubiquitin-like modifier-activating enzyme atg7 (704 aa).

The short motif at 372 to 377 is the GXGXXG motif element; that stretch reads GAGTLG. Catalysis depends on cysteine 555, which acts as the Glycyl thioester intermediate. The homodimerization stretch occupies residues 660-699; sequence ALTEKDYITELSGLAEVQRKAEAAANDVEWDSDEEGMEDE. Positions 682 to 704 are disordered; that stretch reads AAANDVEWDSDEEGMEDEEPELL. Residues 687–704 show a composition bias toward acidic residues; sequence VEWDSDEEGMEDEEPELL.

The protein belongs to the ATG7 family. In terms of assembly, homodimer. Interacts with ATG8 through a thioester bond between Cys-555 and the C-terminal Gly of ATG8 and with ATG12 through a thioester bond between Cys-555 and the C-terminal Gly of ATG12. Also interacts with ATG3.

It is found in the cytoplasm. The protein resides in the preautophagosomal structure. E1-like activating enzyme involved in the 2 ubiquitin-like systems required for cytoplasm to vacuole transport (Cvt) and autophagy. Activates ATG12 for its conjugation with ATG5 and ATG8 for its conjugation with phosphatidylethanolamine. Both systems are needed for the ATG8 association to Cvt vesicles and autophagosomes membranes. Autophagy is essential for maintenance of amino acid levels and protein synthesis under nitrogen starvation. Required for selective autophagic degradation of the nucleus (nucleophagy) as well as for mitophagy which contributes to regulate mitochondrial quantity and quality by eliminating the mitochondria to a basal level to fulfill cellular energy requirements and preventing excess ROS production. Required for normal mycelial growth and conidiogenesis, and regulates sclerotial formation. Plays an essential role in pathogenesis. The chain is Ubiquitin-like modifier-activating enzyme atg7 from Botryotinia fuckeliana (strain T4) (Noble rot fungus).